Here is a 269-residue protein sequence, read N- to C-terminus: Acyl-CoA-binding domain-containing protein 4 (269 aa).

Residues 12–101 (CQKQFQAAVS…MKLVAQKVID (90 aa)) form the ACB domain. Residues 23–32 (IQNLPKNGSY), 43–47 (YSYYK), lysine 69, and tyrosine 88 contribute to the an acyl-CoA site. Disordered stretches follow at residues 150-175 (GAVS…PRDL), 195-226 (EQRA…QCSA), and 248-269 (VALP…SAAN). Pro residues predominate over residues 156 to 167 (PCLPKEPAPPSP). A phosphoserine mark is found at serine 166 and serine 171.

In terms of biological role, binds medium- and long-chain acyl-CoA esters and may function as an intracellular carrier of acyl-CoA esters. The protein is Acyl-CoA-binding domain-containing protein 4 (ACBD4) of Pongo abelii (Sumatran orangutan).